A 284-amino-acid polypeptide reads, in one-letter code: MTAPLSLGWPAPAKLNLFLHINARRHDGYHELQTLFQFVEHCDYLDFKVLDKPELKLHSNLAGVVADSDNLILKAAKSLQQHTKCQFGVEIWLDKRLPMGGGLGGGSSDAATTLVALNQLWETGLSATELCELGLKLGADVPVFINGFSAFAEGVGEKLQNVEPAEPWYLVLVPQVHVSTAEVFQDPELPRNTPKLSLESLMNSPWQNDCQSLVAKRHPQVAKTLGWLLEYAPSRMTGTGACVFGQFEQEQEAKDVLAKLPASIQGFVAKGANISPLMLRLAQC.

Lys-14 is a catalytic residue. 98–108 lines the ATP pocket; sequence PMGGGLGGGSS. Asp-140 is a catalytic residue.

This sequence belongs to the GHMP kinase family. IspE subfamily.

The enzyme catalyses 4-CDP-2-C-methyl-D-erythritol + ATP = 4-CDP-2-C-methyl-D-erythritol 2-phosphate + ADP + H(+). It functions in the pathway isoprenoid biosynthesis; isopentenyl diphosphate biosynthesis via DXP pathway; isopentenyl diphosphate from 1-deoxy-D-xylulose 5-phosphate: step 3/6. Functionally, catalyzes the phosphorylation of the position 2 hydroxy group of 4-diphosphocytidyl-2C-methyl-D-erythritol. This is 4-diphosphocytidyl-2-C-methyl-D-erythritol kinase from Shewanella halifaxensis (strain HAW-EB4).